An 890-amino-acid chain; its full sequence is Translation initiation factor IF-2 (890 aa).

Positions 45-304 are disordered; sequence LIDHLNQKNS…LQQGFQKPAQ (260 aa). A compositionally biased stretch (polar residues) spans 67–81; the sequence is STLNIPGTGGKSKSV. The span at 92-217 shows a compositional bias: basic and acidic residues; it reads VKRDPQEAER…RMAEENKWID (126 aa). Over residues 252 to 266 the composition is skewed to basic residues; sequence GRGRNAKAARPKKGN. A compositionally biased stretch (basic and acidic residues) spans 267-280; the sequence is KHAESKADREEARA. In terms of domain architecture, tr-type G spans 389-558; it reads PRAPVVTIMG…LLQAEVLELK (170 aa). The G1 stretch occupies residues 398-405; sequence GHVDHGKT. A GTP-binding site is contributed by 398–405; it reads GHVDHGKT. The tract at residues 423–427 is G2; it reads GITQH. A G3 region spans residues 444–447; that stretch reads DTPG. GTP is bound by residues 444 to 448 and 498 to 501; these read DTPGH and NKID. The interval 498-501 is G4; the sequence is NKID. The segment at 534–536 is G5; it reads SAK. Lys-808 carries the post-translational modification N6-acetyllysine.

It belongs to the TRAFAC class translation factor GTPase superfamily. Classic translation factor GTPase family. IF-2 subfamily.

Its subcellular location is the cytoplasm. Functionally, one of the essential components for the initiation of protein synthesis. Protects formylmethionyl-tRNA from spontaneous hydrolysis and promotes its binding to the 30S ribosomal subunits. Also involved in the hydrolysis of GTP during the formation of the 70S ribosomal complex. The sequence is that of Translation initiation factor IF-2 from Escherichia coli O81 (strain ED1a).